A 279-amino-acid polypeptide reads, in one-letter code: Movement protein (279 aa).

The disordered stretch occupies residues 246 to 279; sequence SESEELNVESPPAAIGSSSASRSEAFRPQVVNGL. Residues 254–268 show a composition bias toward low complexity; the sequence is ESPPAAIGSSSASRS.

It belongs to the cucumovirus movement protein family.

It localises to the host cell junction. Its subcellular location is the host plasmodesma. Functionally, transports viral genome to neighboring plant cells directly through plasmosdesmata, without any budding. The movement protein allows efficient cell to cell propagation, by bypassing the host cell wall barrier. Acts by forming a tubular structure at the host plasmodesmata, enlarging it enough to allow free passage of virion capsids. In Cucumis sativus (Cucumber), this protein is Movement protein.